The sequence spans 251 residues: MQTLEEHCWSCSCTRGRDKKGTRLSTWLAQRAAKAMSSLNSLLSLAYHTLASSEGRSLIRRSLVLFAVGVFLALVLNLLQIQRNVTLFPEEVIATIFSSAWWVPPCCGTAAAVVGLLYPCIDSHLGEPHKFKREWASVMRCIAVFVGINHASAKLDFANNVQLSLTLAALSLGLWWTFDRSRSGLGLGITIAFLATLITQFLVYNGVYQYTSPDFLYIRSWLPCIFFSGGVTVGNIGRQLAMGSSEKTHSD.

The Cytoplasmic portion of the chain corresponds to 1–58 (MQTLEEHCWSCSCTRGRDKKGTRLSTWLAQRAAKAMSSLNSLLSLAYHTLASSEGRSL). The chain crosses the membrane as a helical span at residues 59 to 81 (IRRSLVLFAVGVFLALVLNLLQI). At 82–100 (QRNVTLFPEEVIATIFSSA) the chain is on the extracellular side. A helical transmembrane segment spans residues 101–118 (WWVPPCCGTAAAVVGLLY). At 119 to 133 (PCIDSHLGEPHKFKR) the chain is on the cytoplasmic side. The helical transmembrane segment at 134–156 (EWASVMRCIAVFVGINHASAKLD) threads the bilayer. The Extracellular segment spans residues 157 to 159 (FAN). A helical transmembrane segment spans residues 160-178 (NVQLSLTLAALSLGLWWTF). Residues 179-183 (DRSRS) are Cytoplasmic-facing. Residues 184 to 205 (GLGLGITIAFLATLITQFLVYN) traverse the membrane as a helical segment. Residues 206-219 (GVYQYTSPDFLYIR) are Extracellular-facing. The helical transmembrane segment at 220–237 (SWLPCIFFSGGVTVGNIG) threads the bilayer. Over 238 to 251 (RQLAMGSSEKTHSD) the chain is Cytoplasmic. The KxHxx motif lies at 245-251 (SEKTHSD).

Belongs to the INSIG family. In terms of assembly, interacts with scap; interaction is direct and only takes place in the presence of sterols; it prevents interaction between scap and the coat protein complex II (COPII). Associates with the SCAP-SREBP complex; association is mediated via its interaction with scap and only takes place in the presence of sterols.

The protein localises to the endoplasmic reticulum membrane. Oxysterol-binding protein that mediates feedback control of cholesterol synthesis by controlling both endoplasmic reticulum to Golgi transport of scap and degradation of hmgcr. Acts as a negative regulator of cholesterol biosynthesis by mediating the retention of the SCAP-SREBP complex in the endoplasmic reticulum, thereby blocking the processing of sterol regulatory element-binding proteins (SREBPs). Binds oxysterol, including 25-hydroxycholesterol, regulating interaction with scap and retention of the SCAP-SREBP complex in the endoplasmic reticulum. In presence of oxysterol, interacts with scap, retaining the SCAP-SREBP complex in the endoplasmic reticulum, thereby preventing scap from escorting SREBPs to the Golgi. Sterol deprivation reduces oxysterol-binding, disrupting the interaction between insig1 and scap, thereby promoting Golgi transport of the SCAP-SREBP complex, followed by processing and nuclear translocation of SREBPs. Also regulates cholesterol synthesis by regulating degradation of hmgcr. This is Insulin-induced gene 1 protein from Xenopus tropicalis (Western clawed frog).